The sequence spans 347 residues: Pre-B-cell leukemia transcription factor 1 (347 aa).

Residues 1–37 (MDDQPRLMHSHPGVGMAGHPSLSQHMQDGTGANEGDV) form a disordered region. Positions 38-232 (GRKQDIGDIL…VMILRSRFLD (195 aa)) constitute a PBC domain. Residues 45-124 (DILQQIMTIT…EGVAGPEKGG (80 aa)) form a PBC-A region. Positions 127-232 (AAAAAAAAAS…VMILRSRFLD (106 aa)) are PBC-B. A DNA-binding region (homeobox; TALE-type) is located at residues 233 to 295 (ARRKRRNFNK…NKRIRYKKNI (63 aa)). The segment covering 318 to 331 (VHGSQANSPSTPSS) has biased composition (polar residues). Positions 318–347 (VHGSQANSPSTPSSAGGYPSPCYQSDRRIQ) are disordered.

The protein belongs to the TALE/PBX homeobox family. As to quaternary structure, forms a heterodimer with isoform 2 of meis1; the interaction is necessary for neural fate induction. In terms of tissue distribution, shows broad, weak expression from blastula through gastrula stages. At stage 14/15, expressed in a broad arc that gives rise to the forebrain and eyes. More intensely expressed in the lateral neural folds (presumptive neural crest) and as horizontal stripes in the posterior neural plate that give rise to the hindbrain. As development proceeds, expression progresses posteriorly along the neural folds and at stage 21, expression is pronounced in the prospective hindbrain and in migratory neural crest cells. At later stages (stage 26), expression becomes intense within the dorsal portion of the forebrain, and in the optic cup, caudal branchial arch, peripheral to the pronephric anlage, and in the dorsal anterior half of the spinal cord. Expression remains robust in the hindbrain but gradually becomes more restricted. At stage 28, expressed in the dorsal lateral portion of the neural tube and in the somatic layer of the lateral plate mesoderm that surrounds the pronephric anlage.

Its subcellular location is the nucleus. Functionally, acts as a transcriptional activator in complex with isoform 2 of meis1, to induce posterior neural and neural crest gene expression, and thereby specify hindbrain and neural crest cell fate. Binds to a highly conserved region in the promoter of the neural crest gene zic3. Required for the nuclear transport or retention of isoform 2 of meis1. This chain is Pre-B-cell leukemia transcription factor 1 (pbx1), found in Xenopus laevis (African clawed frog).